The primary structure comprises 419 residues: Endothiapepsin (419 aa).

Residues 1–20 (MSSPLKNALVTAMLAGGALS) form the signal peptide. Residues 21–89 (SPTKQHVGIP…QNSTSGLAER (69 aa)) constitute a propeptide, activation peptide. Residues 106–417 (YITPVQIGTP…GATTPTLGFA (312 aa)) enclose the Peptidase A1 domain. Active-site residues include D124 and S288. C344 and C379 form a disulfide bridge.

The protein belongs to the peptidase A1 family.

The catalysed reaction is Hydrolysis of proteins with specificity similar to that of pepsin A, prefers hydrophobic residues at P1 and P1', but does not cleave 14-Ala-|-Leu-15 in the B chain of insulin or Z-Glu-Tyr. Clots milk.. This Cryphonectria parasitica (Chestnut blight fungus) protein is Endothiapepsin (EAPA).